A 226-amino-acid polypeptide reads, in one-letter code: Cold-regulated 413 inner membrane protein 2, chloroplastic (226 aa).

Residues 1–76 constitute a chloroplast transit peptide; it reads MASLCLSSSR…RKRGSSVVCY (76 aa). At 77–79 the chain is on the stromal side; it reads ATP. Residues 80 to 100 traverse the membrane as a helical segment; sequence MLSVHNLQWISTISCVALMFA. At 101–103 the chain is on the chloroplast intermembrane side; sequence RGT. Residues 104 to 124 traverse the membrane as a helical segment; that stretch reads GIHKSFVVPLFALQAPMGIVS. Residues 125–129 are Stromal-facing; the sequence is WMKGE. A helical transmembrane segment spans residues 130–150; it reads YGIWAAFLALLTRLFFSFPVE. Residues 151–152 lie on the Chloroplast intermembrane side of the membrane; that stretch reads LE. A helical membrane pass occupies residues 153-173; the sequence is LPFIALLLVIVAPYQVMSIRG. Over 174-176 the chain is Stromal; the sequence is KQE. The helical transmembrane segment at 177–197 threads the bilayer; that stretch reads GAILSLAISCFLAFQHFSRAG. Topologically, residues 198-205 are chloroplast intermembrane; sequence TLQKAFDQ. The helical transmembrane segment at 206-226 threads the bilayer; it reads NSVLATVAIIGVTVVSFLFLI.

The protein belongs to the Cold-regulated 413 protein family.

The protein localises to the plastid. It is found in the chloroplast inner membrane. This is Cold-regulated 413 inner membrane protein 2, chloroplastic (COR413IM2) from Arabidopsis thaliana (Mouse-ear cress).